The following is a 63-amino-acid chain: Kappa-theraphotoxin-Cg3a 1 (63 aa).

Residues 1–21 (MKNTSILFILGLALLLVLAFE) form the signal peptide. The propeptide occupies 22-29 (VQVGESDG). Intrachain disulfides connect Cys31–Cys46, Cys38–Cys51, and Cys45–Cys58.

Belongs to the neurotoxin 10 (Hwtx-1) family. 44 (Jztx-4) subfamily. Expressed by the venom gland.

It localises to the secreted. Gating modifier of Kv2.1/KCNB1, Kv2.2/KCNB2 and Kv4.3/KCND3 channels. The polypeptide is Kappa-theraphotoxin-Cg3a 1 (Chilobrachys guangxiensis (Chinese earth tiger tarantula)).